Reading from the N-terminus, the 301-residue chain is 3-methyl-2-oxobutanoate hydroxymethyltransferase (301 aa).

Positions 1–12 (MAPSNLPESTTP) are enriched in polar residues. The interval 1-24 (MAPSNLPESTTPAEVPAPYGTGPA) is disordered. 2 residues coordinate Mg(2+): Asp82 and Asp121. 3-methyl-2-oxobutanoate-binding positions include 82-83 (DS), Asp121, and Lys151. Glu153 contacts Mg(2+). Catalysis depends on Glu219, which acts as the Proton acceptor.

It belongs to the PanB family. Homodecamer; pentamer of dimers. It depends on Mg(2+) as a cofactor.

The protein resides in the cytoplasm. The enzyme catalyses 3-methyl-2-oxobutanoate + (6R)-5,10-methylene-5,6,7,8-tetrahydrofolate + H2O = 2-dehydropantoate + (6S)-5,6,7,8-tetrahydrofolate. Its pathway is cofactor biosynthesis; (R)-pantothenate biosynthesis; (R)-pantoate from 3-methyl-2-oxobutanoate: step 1/2. Its function is as follows. Catalyzes the reversible reaction in which hydroxymethyl group from 5,10-methylenetetrahydrofolate is transferred onto alpha-ketoisovalerate to form ketopantoate. The polypeptide is 3-methyl-2-oxobutanoate hydroxymethyltransferase (Paenarthrobacter aurescens (strain TC1)).